A 120-amino-acid polypeptide reads, in one-letter code: Ribosome-binding factor A (120 aa).

Belongs to the RbfA family. Monomer. Binds 30S ribosomal subunits, but not 50S ribosomal subunits or 70S ribosomes.

Its subcellular location is the cytoplasm. Functionally, one of several proteins that assist in the late maturation steps of the functional core of the 30S ribosomal subunit. Associates with free 30S ribosomal subunits (but not with 30S subunits that are part of 70S ribosomes or polysomes). Required for efficient processing of 16S rRNA. May interact with the 5'-terminal helix region of 16S rRNA. The polypeptide is Ribosome-binding factor A (Limosilactobacillus fermentum (strain NBRC 3956 / LMG 18251) (Lactobacillus fermentum)).